We begin with the raw amino-acid sequence, 460 residues long: Ammonium transporter Rh type B (460 aa).

Over methionine 1–isoleucine 10 the chain is Cytoplasmic. A helical membrane pass occupies residues lysine 11–valine 31. Over arginine 32–tyrosine 62 the chain is Extracellular. Asparagine 48 is a glycosylation site (N-linked (GlcNAc...) asparagine). A helical membrane pass occupies residues proline 63–leucine 83. Topologically, residues lysine 84 to glycine 87 are cytoplasmic. The chain crosses the membrane as a helical span at residues phenylalanine 88–isoleucine 108. Topologically, residues glutamine 109–glutamate 125 are extracellular. The helical transmembrane segment at serine 126 to glycine 146 threads the bilayer. At lysine 147–proline 150 the chain is on the cytoplasmic side. Residues valine 151–isoleucine 171 form a helical membrane-spanning segment. Residues leucine 172–aspartate 179 are Extracellular-facing. The chain crosses the membrane as a helical span at residues alanine 180–tyrosine 202. The Cytoplasmic portion of the chain corresponds to arginine 203–aspartate 220. The helical transmembrane segment at leucine 221 to isoleucine 241 threads the bilayer. The Extracellular segment spans residues threonine 242–valine 252. A helical transmembrane segment spans residues methionine 253–leucine 273. The Cytoplasmic portion of the chain corresponds to asparagine 274–histidine 283. Residues isoleucine 284–threonine 304 form a helical membrane-spanning segment. A topological domain (extracellular) is located at residue proline 305. A helical transmembrane segment spans residues phenylalanine 306–leucine 326. The Cytoplasmic portion of the chain corresponds to threonine 327–glycine 347. A helical transmembrane segment spans residues methionine 348–isoleucine 368. The Extracellular segment spans residues tyrosine 369–glutamine 394. The helical transmembrane segment at phenylalanine 395–isoleucine 415 threads the bilayer. Residues leucine 416–alanine 460 lie on the Cytoplasmic side of the membrane.

The protein belongs to the ammonium transporter (TC 2.A.49) family. Rh subfamily.

Its subcellular location is the basolateral cell membrane. It localises to the cytoplasmic vesicle membrane. In terms of biological role, functions as a specific ammonium transporter. The sequence is that of Ammonium transporter Rh type B (rhbg) from Xenopus tropicalis (Western clawed frog).